Reading from the N-terminus, the 203-residue chain is Small ribosomal subunit protein uS4 (203 aa).

The S4 RNA-binding domain maps to 93 to 153; that stretch reads RRLDNVVYRL…EKSKNLQQVK (61 aa).

This sequence belongs to the universal ribosomal protein uS4 family. In terms of assembly, part of the 30S ribosomal subunit. Contacts protein S5. The interaction surface between S4 and S5 is involved in control of translational fidelity.

One of the primary rRNA binding proteins, it binds directly to 16S rRNA where it nucleates assembly of the body of the 30S subunit. Its function is as follows. With S5 and S12 plays an important role in translational accuracy. In Lactobacillus delbrueckii subsp. bulgaricus (strain ATCC 11842 / DSM 20081 / BCRC 10696 / JCM 1002 / NBRC 13953 / NCIMB 11778 / NCTC 12712 / WDCM 00102 / Lb 14), this protein is Small ribosomal subunit protein uS4.